A 299-amino-acid chain; its full sequence is B-box zinc finger protein 22 (299 aa).

Residues Cys5, Cys8, Cys28, His33, Cys57, Cys60, Cys80, and His85 each contribute to the Zn(2+) site. The B box-type 1; atypical zinc finger occupies 5–47 (CNVCEAAEATVLCCADEAALCWACDEKIHAANKLAGKHQRVPL). The segment at 57-99 (CDICQEASGFFFCLQDRALLCRKCDVAIHTVNPHVSAHQRFLL) adopts a B box-type 2; atypical zinc-finger fold. Disordered stretches follow at residues 143–181 (FDHH…GSTT) and 206–299 (ENNG…RRRF). Composition is skewed to polar residues over residues 164–181 (VNDQ…GSTT), 251–260 (QIQSPPTASG), and 277–290 (ITSS…SPNQ).

In terms of assembly, interacts with HY5. Ubiquitinated by COP1 in vitro. COP1-mediated degradation of BBX22 by the proteasome occurs in the dark and is important for a precise skotomorphogenesis process and optimization of seedling growth under short days conditions.

It is found in the nucleus. Acts as a positive regulator of seedling photomorphogenesis and light-regulated inhibition of hypocotyl elongation, independently and in concert with HY5 and BBX21. Acts as a positive regulator of de-etiolation and influences chloroplast biogenesis and function through regulation of genes encoding chloroplast proteins. Acts downstream of COP1 and plays an important role in early and long-term adjustment of the shade avoidance syndrome (SAS) responses in natural environments. Regulates the expression of genes responsive to light hormone signals which may contribute to optimal seedling development. The sequence is that of B-box zinc finger protein 22 from Arabidopsis thaliana (Mouse-ear cress).